The following is a 69-amino-acid chain: MKAIISLLLISAMVFSMIEAVPVEEGLQLFEGERGCLPHNRFCNALSGPRCCSGLKCKELSIWDSRCLG.

The signal sequence occupies residues 1-20 (MKAIISLLLISAMVFSMIEA). A propeptide spanning residues 21–34 (VPVEEGLQLFEGER) is cleaved from the precursor. 3 disulfide bridges follow: Cys-36/Cys-52, Cys-43/Cys-57, and Cys-51/Cys-67. Leu-68 is modified (leucine amide).

This sequence belongs to the neurotoxin 01 (U2-agtx) family. Expressed by the venom gland.

It is found in the secreted. Functionally, insect active toxin causing rapid but reversible paralysis in crickets. No activity shown in mammals. Does not show effect on mammalian voltage-gated calcium channels. The sequence is that of U2-agatoxin-Ao1c from Agelena orientalis (Funnel-web spider).